A 254-amino-acid chain; its full sequence is Zinc finger FYVE domain-containing protein 21 (254 aa).

The segment at 44-104 (DKECPRCMQC…QCAGCAPVSR (61 aa)) adopts an FYVE-type zinc-finger fold. Zn(2+)-binding residues include cysteine 50, cysteine 53, cysteine 66, cysteine 69, cysteine 74, cysteine 77, cysteine 96, and cysteine 99. The interval 107-254 (ADFYDRQLKL…AKLLYESRDQ (148 aa)) is PH-like.

Interacts with PTK2/FAK1.

It is found in the cell junction. It localises to the focal adhesion. The protein resides in the cytoplasmic vesicle. Its subcellular location is the endosome. In terms of biological role, plays a role in cell adhesion, and thereby in cell motility which requires repeated formation and disassembly of focal adhesions. Regulates microtubule-induced PTK2/FAK1 dephosphorylation, an event important for focal adhesion disassembly, as well as integrin beta-1/ITGB1 cell surface expression. In Bos taurus (Bovine), this protein is Zinc finger FYVE domain-containing protein 21 (ZFYVE21).